A 595-amino-acid chain; its full sequence is DNA damage-binding protein CMR1 (595 aa).

The tract at residues 20-79 is disordered; sequence ALLDSLGLDPAGASSPFGSSPAPTSNKTKPKPKPAPKKRKAAAVIAVDEGPRRRSGRIAG. Residues 29–46 are compositionally biased toward low complexity; that stretch reads PAGASSPFGSSPAPTSNK. Residues 47–60 show a composition bias toward basic residues; the sequence is TKPKPKPAPKKRKA. WD repeat units lie at residues 185-226, 255-297, 300-339, and 349-389; these read VTNE…MEKP, HAKN…ELFS, DEDL…RESG, and GRGA…SISS. The interval 397 to 429 is disordered; that stretch reads AIEEEEEGTSTLSGQSSSLPHDTHPTRESDYST. The segment covering 405-415 has biased composition (low complexity); that stretch reads TSTLSGQSSSL. Over residues 417–426 the composition is skewed to basic and acidic residues; it reads HDTHPTRESD. WD repeat units lie at residues 448 to 487, 519 to 556, and 558 to 595; these read QHGK…SLVD, LRAQ…VGLW, and DDVT…GDHI.

Belongs to the WD repeat DDB2/WDR76 family.

Functionally, DNA-binding protein that binds to both single- and double-stranded DNA. Binds preferentially to UV-damaged DNA. May be involved in DNA-metabolic processes. The polypeptide is DNA damage-binding protein CMR1 (Cryptococcus neoformans var. neoformans serotype D (strain B-3501A) (Filobasidiella neoformans)).